Reading from the N-terminus, the 300-residue chain is MTQEGKLEQQFLNYLHSERNYSVNTSTAYENDILDFRRFLNEQAISEYQQVTFLDVRIYLTELKQKSFSRTTVARKISSLRSFYTFLLRENVISENPFTYVSHAKNQLRLPKFFYSEEMEALFQVVYEDNETLTLRDRVLLEVLYGTGIRVSECAGILLSDLDTSYQAILIRGKGNKERYVPFGAYAEDAITDYLSSRTELMIRFKKEHDSLLINHYGDPLTTRGIRYCLTKIISKASLTRKIHPHMLRHTFATDLLNNGADMRTVQELLGHASLSSTQIYTHVTKEHLKSTYMKHHPRA.

A Core-binding (CB) domain is found at 2–88 (TQEGKLEQQF…SLRSFYTFLL (87 aa)). Positions 109–294 (RLPKFFYSEE…TKEHLKSTYM (186 aa)) constitute a Tyr recombinase domain. Residues R150, K174, H246, R249, and H272 contribute to the active site. Catalysis depends on Y281, which acts as the O-(3'-phospho-DNA)-tyrosine intermediate.

This sequence belongs to the 'phage' integrase family. XerC subfamily. In terms of assembly, forms a cyclic heterotetrameric complex composed of two molecules of XerC and two molecules of XerD.

It localises to the cytoplasm. Functionally, site-specific tyrosine recombinase, which acts by catalyzing the cutting and rejoining of the recombining DNA molecules. The XerC-XerD complex is essential to convert dimers of the bacterial chromosome into monomers to permit their segregation at cell division. It also contributes to the segregational stability of plasmids. This chain is Tyrosine recombinase XerC, found in Listeria welshimeri serovar 6b (strain ATCC 35897 / DSM 20650 / CCUG 15529 / CIP 8149 / NCTC 11857 / SLCC 5334 / V8).